A 325-amino-acid polypeptide reads, in one-letter code: MSWLTPEVIDILLTVVKAVVILLVVVTCGAYMSFAERRLLGLFQNRYGPNRVGWGGSLQLLADVLKMMFKEDWIPPFADRGIFTLAPVIAFTSLLITFAIVPVSPTWVVADFNIGVLFFLMMAGLAVYAVLFAGWSSNNKYSLLGAMRASAQTLSYEVFLGLSLMGVVAQAGSFNLGAIVESQAHLWNVVPQFFGFVTFALAGVAVCHRHPFDQPEAEQELADGYHIEYSGMKFGLFFVGEYVGIVTISALMVTLFFGGWQGPWLPPFIWFSIKTAFFMMMFILIRAALPRPRYDQVMALGWKICLPLTLLNLLATAAVILYNAH.

A run of 8 helical transmembrane segments spans residues 8-28 (VIDI…VVTC), 81-101 (GIFT…FAIV), 114-134 (IGVL…LFAG), 159-179 (FLGL…LGAI), 186-206 (LWNV…GVAV), 237-257 (FFVG…TLFF), 265-285 (LPPF…FILI), and 304-324 (ICLP…LYNA).

This sequence belongs to the complex I subunit 1 family. In terms of assembly, NDH-1 is composed of 13 different subunits. Subunits NuoA, H, J, K, L, M, N constitute the membrane sector of the complex.

Its subcellular location is the cell inner membrane. The enzyme catalyses a quinone + NADH + 5 H(+)(in) = a quinol + NAD(+) + 4 H(+)(out). In terms of biological role, NDH-1 shuttles electrons from NADH, via FMN and iron-sulfur (Fe-S) centers, to quinones in the respiratory chain. The immediate electron acceptor for the enzyme in this species is believed to be ubiquinone. Couples the redox reaction to proton translocation (for every two electrons transferred, four hydrogen ions are translocated across the cytoplasmic membrane), and thus conserves the redox energy in a proton gradient. This subunit may bind ubiquinone. The protein is NADH-quinone oxidoreductase subunit H of Sodalis glossinidius (strain morsitans).